Consider the following 369-residue polypeptide: Putative esterase slr0264 (369 aa).

Residues S162, D303, and H334 each act as charge relay system in the active site.

It belongs to the AB hydrolase superfamily. AB hydrolase 4 family.

This chain is Putative esterase slr0264, found in Synechocystis sp. (strain ATCC 27184 / PCC 6803 / Kazusa).